The chain runs to 318 residues: Pantothenate kinase (318 aa).

96–103 serves as a coordination point for ATP; sequence GSVAVGKS.

Belongs to the prokaryotic pantothenate kinase family.

The protein resides in the cytoplasm. The enzyme catalyses (R)-pantothenate + ATP = (R)-4'-phosphopantothenate + ADP + H(+). The protein operates within cofactor biosynthesis; coenzyme A biosynthesis; CoA from (R)-pantothenate: step 1/5. This chain is Pantothenate kinase, found in Coxiella burnetii (strain Dugway 5J108-111).